The following is a 194-amino-acid chain: Putative adenylate kinase (194 aa).

Residues G16, G18, K19, T20, and T21 each coordinate ATP. Residues 36 to 59 are NMP; sequence SVGELLAGTPYVTYIPELDTYEIV. Positions 108-118 are LID; sequence RRGWPLKKILD. R109 contacts ATP.

The protein belongs to the adenylate kinase family. AK6 subfamily. Interacts with uS11. Not a structural component of 40S pre-ribosomes, but transiently interacts with them by binding to uS11.

It carries out the reaction AMP + ATP = 2 ADP. The catalysed reaction is ATP + H2O = ADP + phosphate + H(+). In terms of biological role, broad-specificity nucleoside monophosphate (NMP) kinase that catalyzes the reversible transfer of the terminal phosphate group between nucleoside triphosphates and monophosphates. Also has ATPase activity. Involved in the late maturation steps of the 30S ribosomal particles, specifically 16S rRNA maturation. While NMP activity is not required for ribosome maturation, ATPase activity is. Associates transiently with small ribosomal subunit protein uS11. ATP hydrolysis breaks the interaction with uS11. May temporarily remove uS11 from the ribosome to enable a conformational change of the ribosomal RNA that is needed for the final maturation step of the small ribosomal subunit. This is Putative adenylate kinase from Pyrobaculum aerophilum (strain ATCC 51768 / DSM 7523 / JCM 9630 / CIP 104966 / NBRC 100827 / IM2).